The following is a 301-amino-acid chain: Glycine--tRNA ligase alpha subunit (301 aa).

It belongs to the class-II aminoacyl-tRNA synthetase family. Tetramer of two alpha and two beta subunits.

Its subcellular location is the cytoplasm. The enzyme catalyses tRNA(Gly) + glycine + ATP = glycyl-tRNA(Gly) + AMP + diphosphate. The chain is Glycine--tRNA ligase alpha subunit from Shewanella amazonensis (strain ATCC BAA-1098 / SB2B).